Consider the following 73-residue polypeptide: Homeodomain-only protein (73 aa).

Positions 3–62 form a DNA-binding region, homeobox; degenerate; that stretch reads TEKSVTPTEEQLEILEYNFCKVNKHPDPTTLCLIAAETGLSEEQTLKWFKQRLAEWRKSE.

It localises to the nucleus. The protein localises to the cytoplasm. In terms of biological role, atypical homeodomain protein which does not bind DNA and is required to modulate cardiac growth and development. May act via an interaction with SRF, leading to modulate the expression of SRF-dependent cardiac-specific genes and cardiac development. May act as a co-chaperone for HSPA1A and HSPA1B chaperone proteins and assist in chaperone-mediated protein refolding. The chain is Homeodomain-only protein (HOPX) from Gallus gallus (Chicken).